Reading from the N-terminus, the 352-residue chain is Molybdenum import ATP-binding protein ModC (352 aa).

The 229-residue stretch at 1–229 folds into the ABC transporter domain; that stretch reads MLELNFSQTL…SVMNPWLPKE (229 aa). Position 31–38 (31–38) interacts with ATP; the sequence is GVSGAGKT. In terms of domain architecture, Mop spans 289 to 352; it reads QTSIRNVLRA…AQIKSVSITA (64 aa).

The protein belongs to the ABC transporter superfamily. Molybdate importer (TC 3.A.1.8) family. In terms of assembly, the complex is composed of two ATP-binding proteins (ModC), two transmembrane proteins (ModB) and a solute-binding protein (ModA).

It localises to the cell inner membrane. The catalysed reaction is molybdate(out) + ATP + H2O = molybdate(in) + ADP + phosphate + H(+). Functionally, part of the ABC transporter complex ModABC involved in molybdenum import. Responsible for energy coupling to the transport system. The sequence is that of Molybdenum import ATP-binding protein ModC from Escherichia coli (strain K12).